Here is an 800-residue protein sequence, read N- to C-terminus: Structural protein ORF800 (800 aa).

Coiled coils occupy residues 98–130 (AENIVEYLKEEEKVKELLNKLNDALSQADYNLA), 447–475 (LLAEANNLIDQANAVITQVNNMMNNANNL), 514–567 (AINQ…ANNL), and 606–633 (AINQDSVNQVEENIQNIQNTITEFNLLA). The tract at residues 759 to 800 (AESIAESESETTESENNETTESTANSEGEKQEGEHGARLIRV) is disordered. A compositionally biased stretch (acidic residues) spans 761–776 (SIAESESETTESENNE). The segment covering 785–800 (EGEKQEGEHGARLIRV) has biased composition (basic and acidic residues).

It localises to the virion. The polypeptide is Structural protein ORF800 (Acidianus convivator (ATV)).